Reading from the N-terminus, the 198-residue chain is MKLYSLSVLYKGENKVHLLKSAYDVSSFSFFQRSSIQEFMAFTSQLIVERSDKGSRSSVKEQEYLCHVYVRNDSLAGVVIADNEYPPRVCFTLLEKVLEEFSTQVDRIDWPSGSPATIQYNALDSYLSKYQNPRDADPMSKVQAELDETKIILHNTMESLLQRGEKLDDLVSKSEVLGTQSKAFYKTARKQNSCCDIM.

Residues 8-127 (VLYKGENKVH…IQYNALDSYL (120 aa)) form the Longin domain. Residues 138-198 (PMSKVQAELD…RKQNSCCDIM (61 aa)) form the v-SNARE coiled-coil homology domain. Cys-194 carries the S-palmitoyl cysteine lipid modification. Cys-195 bears the Cysteine methyl ester mark. Cys-195 is lipidated: S-farnesyl cysteine. Positions 196–198 (DIM) are cleaved as a propeptide — removed in mature form.

This sequence belongs to the synaptobrevin family. In terms of processing, palmitoylated; catalyzes its own palmitoylation. Palmitoylation is required for Golgi targeting. Post-translationally, farnesylation is required for Golgi targeting.

Its subcellular location is the cytoplasm. It localises to the cytosol. It is found in the cytoplasmic vesicle membrane. The protein resides in the golgi apparatus membrane. Functionally, vesicular soluble NSF attachment protein receptor (v-SNARE) mediating vesicle docking and fusion to a specific acceptor cellular compartment. Functions in endoplasmic reticulum to Golgi transport; as part of a SNARE complex composed of GOSR1, GOSR2 and STX5. Functions in early/recycling endosome to TGN transport; as part of a SNARE complex composed of BET1L, GOSR1 and STX5. Has a S-palmitoyl transferase activity. The chain is Synaptobrevin homolog YKT6-A (ykt6-a) from Xenopus laevis (African clawed frog).